Consider the following 104-residue polypeptide: UPF0473 protein LGAS_0424 (104 aa).

The protein belongs to the UPF0473 family.

In Lactobacillus gasseri (strain ATCC 33323 / DSM 20243 / BCRC 14619 / CIP 102991 / JCM 1131 / KCTC 3163 / NCIMB 11718 / NCTC 13722 / AM63), this protein is UPF0473 protein LGAS_0424.